A 108-amino-acid chain; its full sequence is UPF0060 membrane protein Sca_1835 (108 aa).

Helical transmembrane passes span 5-25 (ILIFILAGLCEIGGGYLIWLW), 34-54 (FGLLGGILLISYGIVATFQVF), 60-80 (VYAAYGGVFIVMSILWGYVFD), and 84-104 (PDKYDVLGAIVCIIGVLIMLL).

It belongs to the UPF0060 family.

The protein resides in the cell membrane. The sequence is that of UPF0060 membrane protein Sca_1835 from Staphylococcus carnosus (strain TM300).